Here is a 160-residue protein sequence, read N- to C-terminus: Class II hydrophobin 8 (160 aa).

Cystine bridges form between Cys92–Cys141, Cys102–Cys132, Cys103–Cys115, and Cys142–Cys153.

It belongs to the cerato-ulmin hydrophobin family. Homodimer. Homodimers further self-assemble to form highly ordered films at water-air interfaces through intermolecular interactions.

Its subcellular location is the secreted. It is found in the cell wall. Its function is as follows. Aerial growth, conidiation, and dispersal of filamentous fungi in the environment rely upon a capability of their secreting small amphipathic proteins called hydrophobins (HPBs) with low sequence identity. Class I can self-assemble into an outermost layer of rodlet bundles on aerial cell surfaces, conferring cellular hydrophobicity that supports fungal growth, development and dispersal; whereas Class II form highly ordered films at water-air interfaces through intermolecular interactions but contribute nothing to the rodlet structure. This is Class II hydrophobin 8 from Trichoderma asperellum (strain ATCC 204424 / CBS 433.97 / NBRC 101777).